The following is a 122-amino-acid chain: Large ribosomal subunit protein bL12 (122 aa).

Belongs to the bacterial ribosomal protein bL12 family. As to quaternary structure, homodimer. Part of the ribosomal stalk of the 50S ribosomal subunit. Forms a multimeric L10(L12)X complex, where L10 forms an elongated spine to which 2 to 4 L12 dimers bind in a sequential fashion. Binds GTP-bound translation factors.

Forms part of the ribosomal stalk which helps the ribosome interact with GTP-bound translation factors. Is thus essential for accurate translation. The protein is Large ribosomal subunit protein bL12 of Sulfurimonas denitrificans (strain ATCC 33889 / DSM 1251) (Thiomicrospira denitrificans (strain ATCC 33889 / DSM 1251)).